The primary structure comprises 232 residues: Phosphate import ATP-binding protein PstB (232 aa).

One can recognise an ABC transporter domain in the interval 1-227 (MFNINMEIKE…PKDRRTENYI (227 aa)). 18–25 (GPSGCGKT) lines the ATP pocket.

The protein belongs to the ABC transporter superfamily. Phosphate importer (TC 3.A.1.7) family. The complex is composed of two ATP-binding proteins (PstB), two transmembrane proteins (PstC and PstA) and a solute-binding protein (PstS).

The protein resides in the cell membrane. It catalyses the reaction phosphate(out) + ATP + H2O = ADP + 2 phosphate(in) + H(+). Part of the ABC transporter complex PstSACB involved in phosphate import. Responsible for energy coupling to the transport system. This Mycoplasma mycoides subsp. mycoides SC (strain CCUG 32753 / NCTC 10114 / PG1) protein is Phosphate import ATP-binding protein PstB.